The sequence spans 295 residues: MTLEEQFLSYLKNERSYSPKTVLAYQKDLAAAKKFWQENGGFPGWDQISRRDLEIYLLATGQKLASSTLSRKLSSLKSFYRLLTRRGLVKADPTVAIQLRRGKKKLPEFFYQDEVGQVIRSLNDGKPLTVRNRAIVALFYATGMRLSELTDLKIKQLDLENGMILVHGKGNKDRYVFFDQESKKYLEEYLQVARPSLLKNEPDTEAVFLNKLGRPISSRGIAKAVQQIFQKAGLTAGAHPHELRHSFATAMLNNGADLRSVQELLGHEDLSTTQIYTHVSMQHLTAEYRQHFPRK.

The region spanning 1-84 (MTLEEQFLSY…SLKSFYRLLT (84 aa)) is the Core-binding (CB) domain. Residues 105 to 289 (KLPEFFYQDE…SMQHLTAEYR (185 aa)) form the Tyr recombinase domain. Catalysis depends on residues Arg-145, Lys-169, His-241, Arg-244, and His-267. The active-site O-(3'-phospho-DNA)-tyrosine intermediate is the Tyr-276.

It belongs to the 'phage' integrase family. XerC subfamily. In terms of assembly, forms a cyclic heterotetrameric complex composed of two molecules of XerC and two molecules of XerD.

It is found in the cytoplasm. In terms of biological role, site-specific tyrosine recombinase, which acts by catalyzing the cutting and rejoining of the recombining DNA molecules. The XerC-XerD complex is essential to convert dimers of the bacterial chromosome into monomers to permit their segregation at cell division. It also contributes to the segregational stability of plasmids. In Lactobacillus leichmannii, this protein is Tyrosine recombinase XerC.